Consider the following 80-residue polypeptide: Exodeoxyribonuclease 7 small subunit (80 aa).

This sequence belongs to the XseB family. In terms of assembly, heterooligomer composed of large and small subunits.

The protein resides in the cytoplasm. It catalyses the reaction Exonucleolytic cleavage in either 5'- to 3'- or 3'- to 5'-direction to yield nucleoside 5'-phosphates.. Its function is as follows. Bidirectionally degrades single-stranded DNA into large acid-insoluble oligonucleotides, which are then degraded further into small acid-soluble oligonucleotides. The polypeptide is Exodeoxyribonuclease 7 small subunit (Rickettsia akari (strain Hartford)).